The sequence spans 362 residues: Probable branched-chain-amino-acid aminotransferase (362 aa).

At Lys-202 the chain carries N6-(pyridoxal phosphate)lysine.

Belongs to the class-IV pyridoxal-phosphate-dependent aminotransferase family. It depends on pyridoxal 5'-phosphate as a cofactor.

The catalysed reaction is L-leucine + 2-oxoglutarate = 4-methyl-2-oxopentanoate + L-glutamate. It carries out the reaction L-isoleucine + 2-oxoglutarate = (S)-3-methyl-2-oxopentanoate + L-glutamate. The enzyme catalyses L-valine + 2-oxoglutarate = 3-methyl-2-oxobutanoate + L-glutamate. The protein operates within amino-acid biosynthesis; L-isoleucine biosynthesis; L-isoleucine from 2-oxobutanoate: step 4/4. It participates in amino-acid biosynthesis; L-leucine biosynthesis; L-leucine from 3-methyl-2-oxobutanoate: step 4/4. It functions in the pathway amino-acid biosynthesis; L-valine biosynthesis; L-valine from pyruvate: step 4/4. Functionally, acts on leucine, isoleucine and valine. The chain is Probable branched-chain-amino-acid aminotransferase (ilvE) from Streptomyces coelicolor (strain ATCC BAA-471 / A3(2) / M145).